Consider the following 516-residue polypeptide: uncharacterized protein (516 aa).

5 consecutive transmembrane segments (helical) span residues 10 to 27 (IRYP…GYWI), 32 to 54 (IGAF…GDFA), 64 to 83 (SFLF…PQFV), 95 to 117 (LLAV…ILGL), and 165 to 187 (AVCY…PALL). 2 RCK C-terminal domains span residues 208-291 (KPGL…SRAE) and 296-376 (RELL…NIGV). The next 4 helical transmembrane spans lie at 386 to 408 (FVVL…FPVG), 412 to 430 (IALS…VGHL), 443 to 465 (GAIS…IHAG), and 480 to 502 (LLGG…HFVL).

The protein belongs to the AAE transporter (TC 2.A.81) family.

Its subcellular location is the cell membrane. This is an uncharacterized protein from Bradyrhizobium diazoefficiens (strain JCM 10833 / BCRC 13528 / IAM 13628 / NBRC 14792 / USDA 110).